The primary structure comprises 160 residues: Growth arrest and DNA damage-inducible protein GADD45 beta (160 aa).

Belongs to the GADD45 family. In terms of assembly, interacts with GADD45GIP1.

Its function is as follows. Involved in the regulation of growth and apoptosis. Mediates activation of stress-responsive MTK1/MEKK4 MAPKKK. The sequence is that of Growth arrest and DNA damage-inducible protein GADD45 beta (GADD45B) from Bos taurus (Bovine).